We begin with the raw amino-acid sequence, 291 residues long: UDP-N-acetylenolpyruvoylglucosamine reductase (291 aa).

In terms of domain architecture, FAD-binding PCMH-type spans 22 to 187; that stretch reads RIGGPARYFK…ASATFQLTKD (166 aa). Arg-166 is a catalytic residue. Cys-214 acts as the Proton donor in catalysis. The active site involves Glu-283.

Belongs to the MurB family. FAD is required as a cofactor.

The protein resides in the cytoplasm. It carries out the reaction UDP-N-acetyl-alpha-D-muramate + NADP(+) = UDP-N-acetyl-3-O-(1-carboxyvinyl)-alpha-D-glucosamine + NADPH + H(+). It functions in the pathway cell wall biogenesis; peptidoglycan biosynthesis. In terms of biological role, cell wall formation. The sequence is that of UDP-N-acetylenolpyruvoylglucosamine reductase from Chlamydia trachomatis serovar A (strain ATCC VR-571B / DSM 19440 / HAR-13).